Consider the following 281-residue polypeptide: 4-diphosphocytidyl-2-C-methyl-D-erythritol kinase (281 aa).

Residue lysine 11 is part of the active site. 92–102 (LVSAGLAGGSA) serves as a coordination point for ATP. Residue aspartate 132 is part of the active site.

The protein belongs to the GHMP kinase family. IspE subfamily.

It catalyses the reaction 4-CDP-2-C-methyl-D-erythritol + ATP = 4-CDP-2-C-methyl-D-erythritol 2-phosphate + ADP + H(+). It functions in the pathway isoprenoid biosynthesis; isopentenyl diphosphate biosynthesis via DXP pathway; isopentenyl diphosphate from 1-deoxy-D-xylulose 5-phosphate: step 3/6. In terms of biological role, catalyzes the phosphorylation of the position 2 hydroxy group of 4-diphosphocytidyl-2C-methyl-D-erythritol. The polypeptide is 4-diphosphocytidyl-2-C-methyl-D-erythritol kinase (Ehrlichia ruminantium (strain Gardel)).